Here is a 446-residue protein sequence, read N- to C-terminus: tRNA-2-methylthio-N(6)-dimethylallyladenosine synthase (446 aa).

The region spanning 3-120 (KKIYIKTFGC…LPEMLKQRRS (118 aa)) is the MTTase N-terminal domain. Positions 12, 49, 83, 157, 161, and 164 each coordinate [4Fe-4S] cluster. The 233-residue stretch at 143 to 375 (KVEGATAFVS…QAVIDQNTRR (233 aa)) folds into the Radical SAM core domain. Residues 378-444 (DEMVGTVQRI…AYTLRGEIIV (67 aa)) enclose the TRAM domain.

The protein belongs to the methylthiotransferase family. MiaB subfamily. As to quaternary structure, monomer. [4Fe-4S] cluster serves as cofactor.

Its subcellular location is the cytoplasm. It catalyses the reaction N(6)-dimethylallyladenosine(37) in tRNA + (sulfur carrier)-SH + AH2 + 2 S-adenosyl-L-methionine = 2-methylsulfanyl-N(6)-dimethylallyladenosine(37) in tRNA + (sulfur carrier)-H + 5'-deoxyadenosine + L-methionine + A + S-adenosyl-L-homocysteine + 2 H(+). Functionally, catalyzes the methylthiolation of N6-(dimethylallyl)adenosine (i(6)A), leading to the formation of 2-methylthio-N6-(dimethylallyl)adenosine (ms(2)i(6)A) at position 37 in tRNAs that read codons beginning with uridine. In Janthinobacterium sp. (strain Marseille) (Minibacterium massiliensis), this protein is tRNA-2-methylthio-N(6)-dimethylallyladenosine synthase.